Consider the following 429-residue polypeptide: 3-phosphoshikimate 1-carboxyvinyltransferase (429 aa).

3-phosphoshikimate-binding residues include Lys20, Ser21, and Arg25. Lys20 is a binding site for phosphoenolpyruvate. Phosphoenolpyruvate is bound by residues Gly89 and Arg118. 3-phosphoshikimate-binding residues include Ser164, Ser165, Gln166, Ser192, Asp311, and Lys338. Gln166 contributes to the phosphoenolpyruvate binding site. Residue Asp311 is the Proton acceptor of the active site. The phosphoenolpyruvate site is built by Arg342 and Arg384.

It belongs to the EPSP synthase family. As to quaternary structure, monomer.

It is found in the cytoplasm. The enzyme catalyses 3-phosphoshikimate + phosphoenolpyruvate = 5-O-(1-carboxyvinyl)-3-phosphoshikimate + phosphate. It functions in the pathway metabolic intermediate biosynthesis; chorismate biosynthesis. Its function is as follows. Catalyzes the transfer of the enolpyruvyl moiety of phosphoenolpyruvate (PEP) to the 5-hydroxyl of shikimate-3-phosphate (S3P) to produce enolpyruvyl shikimate-3-phosphate and inorganic phosphate. In Methanococcus maripaludis (strain C5 / ATCC BAA-1333), this protein is 3-phosphoshikimate 1-carboxyvinyltransferase.